A 60-amino-acid polypeptide reads, in one-letter code: Photosystem II reaction center protein L (60 aa).

A helical membrane pass occupies residues 39-59; the sequence is SLYWGLLLIFVLAVLFSSYIF.

This sequence belongs to the PsbL family. PSII is composed of 1 copy each of membrane proteins PsbA, PsbB, PsbC, PsbD, PsbE, PsbF, PsbH, PsbI, PsbJ, PsbK, PsbL, PsbM, PsbT, PsbX, PsbY, PsbZ, Psb30/Ycf12, at least 3 peripheral proteins of the oxygen-evolving complex and a large number of cofactors. It forms dimeric complexes.

The protein resides in the plastid. It localises to the chloroplast thylakoid membrane. One of the components of the core complex of photosystem II (PSII). PSII is a light-driven water:plastoquinone oxidoreductase that uses light energy to abstract electrons from H(2)O, generating O(2) and a proton gradient subsequently used for ATP formation. It consists of a core antenna complex that captures photons, and an electron transfer chain that converts photonic excitation into a charge separation. This subunit is found at the monomer-monomer interface and is required for correct PSII assembly and/or dimerization. The chain is Photosystem II reaction center protein L from Oedogonium cardiacum (Filamentous green alga).